Here is a 336-residue protein sequence, read N- to C-terminus: Alcohol dehydrogenase (336 aa).

Residues cysteine 37, histidine 58, cysteine 89, cysteine 92, cysteine 95, cysteine 103, and cysteine 145 each contribute to the Zn(2+) site.

This sequence belongs to the zinc-containing alcohol dehydrogenase family. Zn(2+) is required as a cofactor.

It catalyses the reaction a primary alcohol + NAD(+) = an aldehyde + NADH + H(+). It carries out the reaction a secondary alcohol + NAD(+) = a ketone + NADH + H(+). The protein is Alcohol dehydrogenase (adh) of Staphylococcus aureus (strain Mu50 / ATCC 700699).